The following is a 324-amino-acid chain: Beta-ketoacyl-[acyl-carrier-protein] synthase III (324 aa).

Catalysis depends on residues cysteine 112 and histidine 251. The ACP-binding stretch occupies residues 252 to 256 (QANLR). The active site involves asparagine 281.

This sequence belongs to the thiolase-like superfamily. FabH family. Homodimer.

The protein resides in the cytoplasm. It catalyses the reaction malonyl-[ACP] + acetyl-CoA + H(+) = 3-oxobutanoyl-[ACP] + CO2 + CoA. It functions in the pathway lipid metabolism; fatty acid biosynthesis. Its function is as follows. Catalyzes the condensation reaction of fatty acid synthesis by the addition to an acyl acceptor of two carbons from malonyl-ACP. Catalyzes the first condensation reaction which initiates fatty acid synthesis and may therefore play a role in governing the total rate of fatty acid production. Possesses both acetoacetyl-ACP synthase and acetyl transacylase activities. Its substrate specificity determines the biosynthesis of branched-chain and/or straight-chain of fatty acids. The sequence is that of Beta-ketoacyl-[acyl-carrier-protein] synthase III from Clostridium perfringens (strain SM101 / Type A).